The following is a 294-amino-acid chain: Transmembrane protein 178B (294 aa).

The first 23 residues, 1-23 (MAAGKLLLYAGLSLSLCALGMLA), serve as a signal peptide directing secretion. The next 3 helical transmembrane spans lie at 172-192 (AGFM…GMLG), 206-226 (LLFL…VAGI), and 252-272 (MFCA…CTLA).

This sequence belongs to the TMEM178 family.

It localises to the membrane. In Danio rerio (Zebrafish), this protein is Transmembrane protein 178B (tmem178b).